The chain runs to 86 residues: UPF0367 protein PMN2A_1492 (86 aa).

Belongs to the UPF0367 family.

The chain is UPF0367 protein PMN2A_1492 from Prochlorococcus marinus (strain NATL2A).